The following is a 387-amino-acid chain: Formate-dependent phosphoribosylglycinamide formyltransferase (387 aa).

N(1)-(5-phospho-beta-D-ribosyl)glycinamide contacts are provided by residues 15–16 (EL) and Glu-75. Residues Arg-106, Lys-147, 152–157 (SSGKGQ), 187–190 (EEFI), and Glu-195 each bind ATP. Positions 111-301 (DLASNELNIR…EFELHLRAVL (191 aa)) constitute an ATP-grasp domain. Glu-260 and Glu-272 together coordinate Mg(2+). N(1)-(5-phospho-beta-D-ribosyl)glycinamide is bound by residues Asp-279, Lys-349, and 356–357 (RR).

It belongs to the PurK/PurT family. Homodimer.

The catalysed reaction is N(1)-(5-phospho-beta-D-ribosyl)glycinamide + formate + ATP = N(2)-formyl-N(1)-(5-phospho-beta-D-ribosyl)glycinamide + ADP + phosphate + H(+). The protein operates within purine metabolism; IMP biosynthesis via de novo pathway; N(2)-formyl-N(1)-(5-phospho-D-ribosyl)glycinamide from N(1)-(5-phospho-D-ribosyl)glycinamide (formate route): step 1/1. Involved in the de novo purine biosynthesis. Catalyzes the transfer of formate to 5-phospho-ribosyl-glycinamide (GAR), producing 5-phospho-ribosyl-N-formylglycinamide (FGAR). Formate is provided by PurU via hydrolysis of 10-formyl-tetrahydrofolate. This chain is Formate-dependent phosphoribosylglycinamide formyltransferase, found in Prochlorococcus marinus (strain NATL1A).